The primary structure comprises 245 residues: 1-(5-phosphoribosyl)-5-[(5-phosphoribosylamino)methylideneamino] imidazole-4-carboxamide isomerase (245 aa).

The active-site Proton acceptor is Asp-8. Asp-129 serves as the catalytic Proton donor.

Belongs to the HisA/HisF family.

The protein resides in the cytoplasm. It catalyses the reaction 1-(5-phospho-beta-D-ribosyl)-5-[(5-phospho-beta-D-ribosylamino)methylideneamino]imidazole-4-carboxamide = 5-[(5-phospho-1-deoxy-D-ribulos-1-ylimino)methylamino]-1-(5-phospho-beta-D-ribosyl)imidazole-4-carboxamide. It participates in amino-acid biosynthesis; L-histidine biosynthesis; L-histidine from 5-phospho-alpha-D-ribose 1-diphosphate: step 4/9. The protein is 1-(5-phosphoribosyl)-5-[(5-phosphoribosylamino)methylideneamino] imidazole-4-carboxamide isomerase of Geotalea daltonii (strain DSM 22248 / JCM 15807 / FRC-32) (Geobacter daltonii).